The chain runs to 660 residues: Methionine--tRNA ligase (660 aa).

The short motif at 11–21 (PYANGPCHLGH) is the 'HIGH' region element. Positions 143, 146, 155, and 158 each coordinate Zn(2+). Residues 325-329 (KMSTS) carry the 'KMSKS' region motif. Threonine 328 provides a ligand contact to ATP. The tRNA-binding domain maps to 563–660 (DFDKVVIKIG…DECEVGERIQ (98 aa)).

Belongs to the class-I aminoacyl-tRNA synthetase family. MetG type 1 subfamily. Homodimer. The cofactor is Zn(2+).

It localises to the cytoplasm. The enzyme catalyses tRNA(Met) + L-methionine + ATP = L-methionyl-tRNA(Met) + AMP + diphosphate. Functionally, is required not only for elongation of protein synthesis but also for the initiation of all mRNA translation through initiator tRNA(fMet) aminoacylation. The chain is Methionine--tRNA ligase from Methanobrevibacter smithii (strain ATCC 35061 / DSM 861 / OCM 144 / PS).